Consider the following 142-residue polypeptide: Coactosin-like protein (142 aa).

A2 carries the N-acetylalanine modification. The region spanning 2-130 (ATKIDKEACR…EEDFIRSELK (129 aa)) is the ADF-H domain. Residues 66 to 75 (TGDAMSKRSK) are flexible and important for F-actin binding. K102 is modified (N6-acetyllysine). At S141 the chain carries Phosphoserine.

Belongs to the actin-binding proteins ADF family. Coactosin subfamily. Interacts with 5-lipoxygenase (ALOX5/5LO) in a calcium-independent manner. Binds to F-actin with a stoichiometry of 1:2.

The protein localises to the cytoplasm. It localises to the cytoskeleton. The protein resides in the nucleus. In terms of biological role, binds to F-actin in a calcium-independent manner. Has no direct effect on actin depolymerization. Acts as a chaperone for ALOX5 (5LO), influencing both its stability and activity in leukotrienes synthesis. In Mus musculus (Mouse), this protein is Coactosin-like protein (Cotl1).